A 440-amino-acid polypeptide reads, in one-letter code: COP9 signalosome complex subunit 5 (440 aa).

The 148-residue stretch at 71–218 folds into the MPN domain; it reads VLISKLSCEK…MGAFRTIESK (148 aa). Residues H164, H166, and D177 each contribute to the Zn(2+) site. Residues 164–177 carry the JAMM motif motif; the sequence is HSHPGYDCWLSNID. A compositionally biased stretch (polar residues) spans 319–341; it reads TQRGDSTETSSFGSMFSGDNTSD. 2 disordered regions span residues 319–343 and 375–399; these read TQRG…SDVD and SSRS…CHDE.

It belongs to the peptidase M67A family. CSN5 subfamily. Component of a COP9 signalosome-like (CSN) complex, composed of at least RRI1/CSN5, CSN9, RRI2/CSN10, PCI8/CSN11, CSN12 and CSI1. Within this complex it probably interacts directly with CSN12. Also interacts with RPN5. A divalent metal cation is required as a cofactor.

The protein resides in the cytoplasm. It localises to the nucleus. In terms of biological role, catalytic component of the COP9 signalosome (CSN) complex that acts as an regulator of the ubiquitin (Ubl) conjugation pathway by mediating the deneddylation of the cullin subunit of SCF-type E3 ubiquitin-protein ligase complexes. The CSN complex is involved in the regulation of the mating pheromone response. The sequence is that of COP9 signalosome complex subunit 5 (RRI1) from Saccharomyces cerevisiae (strain ATCC 204508 / S288c) (Baker's yeast).